The primary structure comprises 358 residues: DnaJ homolog subfamily C member 18 (358 aa).

One can recognise a J domain in the interval 82–146; sequence NYYEILGVSR…DKRLRYDEYG (65 aa). The helical transmembrane segment at 228–248 threads the bilayer; sequence AFIQLLPVLVIVIISVITQLL.

It is found in the endoplasmic reticulum membrane. In Bos taurus (Bovine), this protein is DnaJ homolog subfamily C member 18 (DNAJC18).